Here is a 185-residue protein sequence, read N- to C-terminus: Elongation factor P 1 (185 aa).

Belongs to the elongation factor P family.

Its subcellular location is the cytoplasm. The protein operates within protein biosynthesis; polypeptide chain elongation. Involved in peptide bond synthesis. Stimulates efficient translation and peptide-bond synthesis on native or reconstituted 70S ribosomes in vitro. Probably functions indirectly by altering the affinity of the ribosome for aminoacyl-tRNA, thus increasing their reactivity as acceptors for peptidyl transferase. This Chlamydia trachomatis serovar D (strain ATCC VR-885 / DSM 19411 / UW-3/Cx) protein is Elongation factor P 1 (efp1).